The following is a 421-amino-acid chain: Polymerase delta-interacting protein 3 (421 aa).

Alanine 2 carries the N-acetylalanine modification. Serine 5 carries the phosphoserine modification. An Omega-N-methylarginine modification is found at arginine 33. 2 positions are modified to phosphoserine: serine 44 and serine 127. At threonine 140 the chain carries Phosphothreonine. Residue lysine 200 forms a Glycyl lysine isopeptide (Lys-Gly) (interchain with G-Cter in SUMO2) linkage. Serine 204, serine 215, and serine 217 each carry phosphoserine. Lysine 223 participates in a covalent cross-link: Glycyl lysine isopeptide (Lys-Gly) (interchain with G-Cter in SUMO2). Serine 244 is subject to Phosphoserine. Lysine 248 participates in a covalent cross-link: Glycyl lysine isopeptide (Lys-Gly) (interchain with G-Cter in SUMO2). Serine 275 carries the phosphoserine modification. An RRM domain is found at 280 to 351; sequence TKMTVNNLHP…QPMKCNLHMN (72 aa). Residues 370-379 show a composition bias toward basic and acidic residues; sequence SMKKESELPR. The interval 370–393 is disordered; the sequence is SMKKESELPRRVNSASSSNPPAEV. Lysine 372 is covalently cross-linked (Glycyl lysine isopeptide (Lys-Gly) (interchain with G-Cter in SUMO2)). A phosphoserine; by RPS6KB1 mark is found at serine 383 and serine 385. Lysine 418 is covalently cross-linked (Glycyl lysine isopeptide (Lys-Gly) (interchain with G-Cter in SUMO2)).

As to quaternary structure, interacts with POLD2. Interacts with NCBP1 and EIF4A3. Associates with the multiprotein exon junction complex (EJC). Interacts with RPS6KB1 (activated). Interacts with ERH. Interacts with THOC2, DDX39B and ZC3H11A; the interactions are ATP-dependent and indicative for an association with the TREX complex. In terms of processing, phosphorylated at Ser-383 and Ser-385 by RPS6KB1.

It is found in the nucleus. Its subcellular location is the nucleus speckle. The protein localises to the cytoplasm. Functionally, is involved in regulation of translation. Is preferentially associated with CBC-bound spliced mRNA-protein complexes during the pioneer round of mRNA translation. Contributes to enhanced translational efficiency of spliced over nonspliced mRNAs. Recruits activated ribosomal protein S6 kinase beta-1 I/RPS6KB1 to newly synthesized mRNA. Involved in nuclear mRNA export; probably mediated by association with the TREX complex. The polypeptide is Polymerase delta-interacting protein 3 (POLDIP3) (Homo sapiens (Human)).